The primary structure comprises 122 residues: Iron-sulfur cluster assembly protein SufA (122 aa).

[2Fe-2S] cluster-binding residues include Cys50, Cys114, and Cys116. Cys50, Cys114, and Cys116 together coordinate [4Fe-4S] cluster.

Belongs to the HesB/IscA family. As to quaternary structure, homodimer. Interacts with SufB and SufC.

In terms of biological role, member of gene cluster sufABCDSE that mediates iron-sulfur cluster assembly under oxidative stress and iron limitation conditions. Binds [2Fe-2S] and [4Fe-4S] clusters by mobilizing sulfur atoms provided by the SufS-SufE cysteine desulfurase system and then transfers the assembled Fe-S clusters to target proteins including ferredoxin and aconitase. Seems to act as a Fe-S cluster carrier rather than a scaffold, this role being performed by SufB and SufC. The sequence is that of Iron-sulfur cluster assembly protein SufA (sufA) from Escherichia coli (strain K12).